We begin with the raw amino-acid sequence, 545 residues long: Chaperonin GroEL 2 (545 aa).

ATP is bound by residues 29-32 (TLGP), 86-90 (DGTTT), glycine 413, 479-481 (NAA), and aspartate 495.

This sequence belongs to the chaperonin (HSP60) family. In terms of assembly, forms a cylinder of 14 subunits composed of two heptameric rings stacked back-to-back. Interacts with the co-chaperonin GroES.

The protein localises to the cytoplasm. The enzyme catalyses ATP + H2O + a folded polypeptide = ADP + phosphate + an unfolded polypeptide.. Together with its co-chaperonin GroES, plays an essential role in assisting protein folding. The GroEL-GroES system forms a nano-cage that allows encapsulation of the non-native substrate proteins and provides a physical environment optimized to promote and accelerate protein folding. The protein is Chaperonin GroEL 2 of Prochlorococcus marinus (strain MIT 9301).